The chain runs to 156 residues: ATP synthase subunit b (156 aa).

Residues 7-27 (FFAQMVVFFILWWVVAKFIWP) traverse the membrane as a helical segment.

This sequence belongs to the ATPase B chain family. As to quaternary structure, F-type ATPases have 2 components, F(1) - the catalytic core - and F(0) - the membrane proton channel. F(1) has five subunits: alpha(3), beta(3), gamma(1), delta(1), epsilon(1). F(0) has three main subunits: a(1), b(2) and c(10-14). The alpha and beta chains form an alternating ring which encloses part of the gamma chain. F(1) is attached to F(0) by a central stalk formed by the gamma and epsilon chains, while a peripheral stalk is formed by the delta and b chains.

The protein resides in the cell inner membrane. F(1)F(0) ATP synthase produces ATP from ADP in the presence of a proton or sodium gradient. F-type ATPases consist of two structural domains, F(1) containing the extramembraneous catalytic core and F(0) containing the membrane proton channel, linked together by a central stalk and a peripheral stalk. During catalysis, ATP synthesis in the catalytic domain of F(1) is coupled via a rotary mechanism of the central stalk subunits to proton translocation. Functionally, component of the F(0) channel, it forms part of the peripheral stalk, linking F(1) to F(0). This Cupriavidus necator (strain ATCC 17699 / DSM 428 / KCTC 22496 / NCIMB 10442 / H16 / Stanier 337) (Ralstonia eutropha) protein is ATP synthase subunit b.